We begin with the raw amino-acid sequence, 76 residues long: ATP synthase subunit 9, mitochondrial (76 aa).

2 helical membrane-spanning segments follow: residues 14–34 and 56–76; these read ISTI…AALI and ALSE…LFAV.

Belongs to the ATPase C chain family. In terms of assembly, F-type ATPases have 2 components, CF(1) - the catalytic core - and CF(0) - the membrane proton channel. CF(1) has five subunits: alpha(3), beta(3), gamma(1), delta(1), epsilon(1). CF(0) has three main subunits: a, b and c.

It is found in the mitochondrion membrane. In terms of biological role, mitochondrial membrane ATP synthase (F(1)F(0) ATP synthase or Complex V) produces ATP from ADP in the presence of a proton gradient across the membrane which is generated by electron transport complexes of the respiratory chain. F-type ATPases consist of two structural domains, F(1) - containing the extramembraneous catalytic core and F(0) - containing the membrane proton channel, linked together by a central stalk and a peripheral stalk. During catalysis, ATP synthesis in the catalytic domain of F(1) is coupled via a rotary mechanism of the central stalk subunits to proton translocation. Part of the complex F(0) domain. A homomeric c-ring of probably 10 subunits is part of the complex rotary element. In Candida glabrata (strain ATCC 2001 / BCRC 20586 / JCM 3761 / NBRC 0622 / NRRL Y-65 / CBS 138) (Yeast), this protein is ATP synthase subunit 9, mitochondrial (ATP9).